A 208-amino-acid polypeptide reads, in one-letter code: N-(5'-phosphoribosyl)anthranilate isomerase (208 aa).

It belongs to the TrpF family.

The enzyme catalyses N-(5-phospho-beta-D-ribosyl)anthranilate = 1-(2-carboxyphenylamino)-1-deoxy-D-ribulose 5-phosphate. The protein operates within amino-acid biosynthesis; L-tryptophan biosynthesis; L-tryptophan from chorismate: step 3/5. The sequence is that of N-(5'-phosphoribosyl)anthranilate isomerase from Neisseria meningitidis serogroup B (strain ATCC BAA-335 / MC58).